The chain runs to 99 residues: Nucleoid-associated protein EbfC (99 aa).

It belongs to the YbaB/EbfC family. Homodimer.

The protein localises to the cytoplasm. Its subcellular location is the nucleoid. Functionally, binds to DNA and alters its conformation. May be involved in regulation of gene expression, nucleoid organization and DNA protection. This Borrelia hermsii (strain HS1 / DAH) protein is Nucleoid-associated protein EbfC.